We begin with the raw amino-acid sequence, 513 residues long: GMP synthase [glutamine-hydrolyzing] (513 aa).

A Glutamine amidotransferase type-1 domain is found at 9–198 (LILVLDFGSQ…IREICKCTGE (190 aa)). Cys86 (nucleophile) is an active-site residue. Residues His172 and Glu174 contribute to the active site. Residues 199–388 (WTMENFIEIE…LGIPEHLVWR (190 aa)) enclose the GMPS ATP-PPase domain. 226–232 (SGGVDSS) contacts ATP.

In terms of assembly, homodimer.

The catalysed reaction is XMP + L-glutamine + ATP + H2O = GMP + L-glutamate + AMP + diphosphate + 2 H(+). It participates in purine metabolism; GMP biosynthesis; GMP from XMP (L-Gln route): step 1/1. Functionally, catalyzes the synthesis of GMP from XMP. This is GMP synthase [glutamine-hydrolyzing] from Macrococcus caseolyticus (strain JCSC5402) (Macrococcoides caseolyticum).